Consider the following 275-residue polypeptide: Nitrogenase iron protein 3 (275 aa).

9–16 (GKGGIGKS) contacts ATP. A [4Fe-4S] cluster-binding site is contributed by Cys-97. Position 100 is an ADP-ribosylarginine; by dinitrogenase reductase ADP-ribosyltransferase (Arg-100). Cys-132 provides a ligand contact to [4Fe-4S] cluster.

The protein belongs to the NifH/BchL/ChlL family. Homodimer. It depends on [4Fe-4S] cluster as a cofactor. Post-translationally, the reversible ADP-ribosylation of Arg-100 inactivates the nitrogenase reductase and regulates nitrogenase activity.

The catalysed reaction is N2 + 8 reduced [2Fe-2S]-[ferredoxin] + 16 ATP + 16 H2O = H2 + 8 oxidized [2Fe-2S]-[ferredoxin] + 2 NH4(+) + 16 ADP + 16 phosphate + 6 H(+). The key enzymatic reactions in nitrogen fixation are catalyzed by the nitrogenase complex, which has 2 components: the iron protein and the molybdenum-iron protein. The polypeptide is Nitrogenase iron protein 3 (nifH3) (Clostridium pasteurianum).